Consider the following 229-residue polypeptide: Large ribosomal subunit protein uL1 (229 aa).

The protein belongs to the universal ribosomal protein uL1 family. Part of the 50S ribosomal subunit.

Its function is as follows. Binds directly to 23S rRNA. The L1 stalk is quite mobile in the ribosome, and is involved in E site tRNA release. Protein L1 is also a translational repressor protein, it controls the translation of the L11 operon by binding to its mRNA. The protein is Large ribosomal subunit protein uL1 of Clostridium botulinum (strain ATCC 19397 / Type A).